We begin with the raw amino-acid sequence, 351 residues long: Inhibin beta C chain (351 aa).

Residues 1–18 form the signal peptide; that stretch reads MASSLLLALLFLTLATVV. Positions 19 to 236 are excised as a propeptide; the sequence is NLKTDGPCPA…EGKHRVRRRG (218 aa). Asparagine 110, asparagine 142, and asparagine 160 each carry an N-linked (GlcNAc...) asparagine glycan. 4 cysteine pairs are disulfide-bonded: cysteine 239–cysteine 247, cysteine 246–cysteine 316, cysteine 275–cysteine 348, and cysteine 279–cysteine 350.

The protein belongs to the TGF-beta family. In terms of assembly, homodimeric or heterodimeric through association with alpha and beta subunits, linked by one or more disulfide bonds. Inhibins are heterodimers of one alpha and one beta subunit. Activins are homo- or heterodimers of beta subunits only.

Its subcellular location is the secreted. In terms of biological role, inhibins and activins inhibit and activate, respectively, the secretion of follitropin by the pituitary gland. Inhibins/activins are involved in regulating a number of diverse functions such as hypothalamic and pituitary hormone secretion, gonadal hormone secretion, germ cell development and maturation, erythroid differentiation, insulin secretion, nerve cell survival, embryonic axial development or bone growth, depending on their subunit composition. Inhibins appear to oppose the functions of activins. This Rattus norvegicus (Rat) protein is Inhibin beta C chain (Inhbc).